The sequence spans 351 residues: High-affinity nickel transport protein (351 aa).

The Cytoplasmic segment spans residues 1-19 (MFQLLAGVRMNSTGRPRAK). The helical transmembrane segment at 20–40 (IILLYALLIAFNIGAWLCALA) threads the bilayer. The Periplasmic segment spans residues 41–51 (AFRDHPVLLGT). The chain crosses the membrane as a helical span at residues 52-72 (ALLAYGLGLRHAVDADHLAAI). The Cytoplasmic segment spans residues 73 to 94 (DNVTRKLMQDGRRPITAGLWFS). Residues 95 to 115 (LGHSSVVVLASVLIAVMATTL) traverse the membrane as a helical segment. Residues 116 to 128 (QERLDAFHEVGSV) are Periplasmic-facing. A helical membrane pass occupies residues 129 to 149 (IGTLASALFLFAIAAINLVIL). The Cytoplasmic segment spans residues 150–199 (RSAYRAFRRVRRGGIYVEEDFDLLFGNRGFLARIFRPLFRFITRSWHMYP). Residues 200–220 (LGMLFALGFDTATEVALLGIS) traverse the membrane as a helical segment. Topologically, residues 221–243 (TMEASRGVPIWSILVFPALFTAG) are periplasmic. The chain crosses the membrane as a helical span at residues 244-264 (MALIDTIDSILMCGAYAWAYA). Residues 265–269 (KPVRK) lie on the Cytoplasmic side of the membrane. The chain crosses the membrane as a helical span at residues 270–290 (LYYNMTITFVSAIVALIVGGI). Residues 291–316 (ETLGLLADKFMLKGVFWNAVGALNEN) lie on the Periplasmic side of the membrane. The helical transmembrane segment at 317 to 337 (FCQLGFVIIGIFTVCWVVSIV) threads the bilayer. Residues 338–351 (VYRLRRYDDSEVRA) are Cytoplasmic-facing.

The protein belongs to the NiCoT transporter (TC 2.A.52) family.

Its subcellular location is the cell inner membrane. Functionally, high-affinity nickel transporter responsible for nickel uptake. Necessary for high levels of activity of hydrogenase and urease. Does not transport cobalt. The chain is High-affinity nickel transport protein (hoxN) from Cupriavidus necator (strain ATCC 17699 / DSM 428 / KCTC 22496 / NCIMB 10442 / H16 / Stanier 337) (Ralstonia eutropha).